The chain runs to 699 residues: Auxin response factor 1 (699 aa).

The segment at residues 122 to 224 (FCKILTPSDT…EQRVGVRRLV (103 aa)) is a DNA-binding region (TF-B3). Disordered regions lie at residues 539–565 (TTTDDKSSVGAGEASAKGTGSHEDSGQ) and 680–699 (EPHPKLLSSANPEQDQKTGF). One can recognise a PB1 domain in the interval 595–684 (RTRIKVQMHG…DEKKIEPHPK (90 aa)). Polar residues predominate over residues 687–699 (SSANPEQDQKTGF).

This sequence belongs to the ARF family. Homodimers and heterodimers. Expressed in roots, culms, leaves and young panicles.

Its subcellular location is the nucleus. Its function is as follows. Auxin response factors (ARFs) are transcriptional factors that bind specifically to the DNA sequence 5'-TGTCTC-3' found in the auxin-responsive promoter elements (AuxREs). This chain is Auxin response factor 1 (ARF1), found in Oryza sativa subsp. japonica (Rice).